A 393-amino-acid polypeptide reads, in one-letter code: Lipid-A-disaccharide synthase (393 aa).

Belongs to the LpxB family.

The enzyme catalyses a lipid X + a UDP-2-N,3-O-bis[(3R)-3-hydroxyacyl]-alpha-D-glucosamine = a lipid A disaccharide + UDP + H(+). The protein operates within bacterial outer membrane biogenesis; LPS lipid A biosynthesis. In terms of biological role, condensation of UDP-2,3-diacylglucosamine and 2,3-diacylglucosamine-1-phosphate to form lipid A disaccharide, a precursor of lipid A, a phosphorylated glycolipid that anchors the lipopolysaccharide to the outer membrane of the cell. In Rhodopseudomonas palustris (strain ATCC BAA-98 / CGA009), this protein is Lipid-A-disaccharide synthase.